Consider the following 412-residue polypeptide: Inositol polyphosphate-5-phosphatase A (412 aa).

Residue Cys-409 is the site of S-farnesyl cysteine attachment. Residues 410-412 (VVQ) constitute a propeptide, removed in mature form.

Belongs to the inositol 1,4,5-trisphosphate 5-phosphatase type I family. As to quaternary structure, interacts with TASOR. In terms of processing, isoprenylation at Cys-409 is required for localization at the membrane. Predominantly expressed in heart, brain, and skeletal muscle. In brain; high level in Purkinje cells.

The protein localises to the cell membrane. It localises to the cell projection. It is found in the dendrite. It carries out the reaction 1D-myo-inositol 1,4,5-trisphosphate + H2O = 1D-myo-inositol 1,4-bisphosphate + phosphate. The enzyme catalyses 1D-myo-inositol 1,3,4,5-tetrakisphosphate + H2O = 1D-myo-inositol 1,3,4-trisphosphate + phosphate. In terms of biological role, phosphatase that specifically hydrolyzes the 5-phosphate of inositol 1,4,5-trisphosphate to inositol 1,4-bisphosphate, and inositol 1,3,4,5-tetrasphosphate to inositol 1,3,4-trisphosphate. Plays a crucial role in the survival of cerebellar Purkinje cells. The polypeptide is Inositol polyphosphate-5-phosphatase A (Homo sapiens (Human)).